We begin with the raw amino-acid sequence, 234 residues long: DNA repair protein RecO (234 aa).

The protein belongs to the RecO family.

In terms of biological role, involved in DNA repair and RecF pathway recombination. The chain is DNA repair protein RecO from Coxiella burnetii (strain RSA 331 / Henzerling II).